A 346-amino-acid chain; its full sequence is MNLNFKVPTWDFIMTDPSSPKLCGQKGSSKNGSPKTSSPKSGSPRACSPKLKHKNNQQLLQNDSINLSSSPSSPSSPSSPPMVGKVTVKKTHTKSSVVPSNSNGNNSPVLKVSQYQVPQNGSSPVLSPVSLIPIQDLNSPNVGYKLELEQRLHKRQLQKRLEKQIQDSEKEKQDQLLIQQQQIQQQQQQIQQQQQQIQLLLNNQNNQNQNQNQNQNQIQNNNIKNGMKLVSIPTPHPNFNNINNINNNNNNNNNNNNSYNGNIETNTPISLPPPICNKYKNNYPSCDVLFKSSLSSSSSASPFSLTPTSQSPILSSPLFHNVPSVESHFINNDSFLQLPPIRDEIF.

A disordered region spans residues 10–109; sequence WDFIMTDPSS…SNSNGNNSPV (100 aa). Residues 26–44 show a composition bias toward low complexity; it reads KGSSKNGSPKTSSPKSGSP. Residues 56-67 are compositionally biased toward polar residues; it reads NQQLLQNDSINL. The segment covering 94–109 has biased composition (low complexity); that stretch reads KSSVVPSNSNGNNSPV.

This is an uncharacterized protein from Dictyostelium discoideum (Social amoeba).